Reading from the N-terminus, the 93-residue chain is Small ribosomal subunit protein bS20c (93 aa).

It belongs to the bacterial ribosomal protein bS20 family.

The protein resides in the plastid. It is found in the chloroplast. Functionally, binds directly to 16S ribosomal RNA. This Phaeodactylum tricornutum (strain CCAP 1055/1) protein is Small ribosomal subunit protein bS20c.